Reading from the N-terminus, the 634-residue chain is Threonine--tRNA ligase (634 aa).

The 61-residue stretch at 1–61 (MINIRFPDGS…NSNCELRLIT (61 aa)) folds into the TGS domain. A catalytic region spans residues 241 to 532 (DHRKIGKVLD…LIEHYAGNLP (292 aa)). The Zn(2+) site is built by cysteine 332, histidine 383, and histidine 509.

The protein belongs to the class-II aminoacyl-tRNA synthetase family. In terms of assembly, homodimer. Requires Zn(2+) as cofactor.

Its subcellular location is the cytoplasm. It catalyses the reaction tRNA(Thr) + L-threonine + ATP = L-threonyl-tRNA(Thr) + AMP + diphosphate + H(+). Its function is as follows. Catalyzes the attachment of threonine to tRNA(Thr) in a two-step reaction: L-threonine is first activated by ATP to form Thr-AMP and then transferred to the acceptor end of tRNA(Thr). Also edits incorrectly charged L-seryl-tRNA(Thr). The polypeptide is Threonine--tRNA ligase (Francisella tularensis subsp. tularensis (strain WY96-3418)).